The primary structure comprises 257 residues: uncharacterized protein (257 aa).

Residues 6-26 (IFWLNLAAIIIISIVVSGGMF) form a helical membrane-spanning segment.

It belongs to the staphylococcal tandem lipoprotein family.

It is found in the cell membrane. This is an uncharacterized protein from Staphylococcus aureus (strain MSSA476).